The sequence spans 160 residues: uncharacterized protein (160 aa).

The N-acetyltransferase domain maps to 2–140 (MIIIPNNEIA…KARRLKPEIP (139 aa)).

This is an uncharacterized protein from Bacillus subtilis (strain 168).